We begin with the raw amino-acid sequence, 809 residues long: Leucine--tRNA ligase (809 aa).

The short motif at 40 to 50 is the 'HIGH' region element; it reads PYPSGRIHMGH. Positions 579–583 match the 'KMSKS' region motif; the sequence is KMSKS. Lys582 is a binding site for ATP.

The protein belongs to the class-I aminoacyl-tRNA synthetase family.

Its subcellular location is the cytoplasm. It carries out the reaction tRNA(Leu) + L-leucine + ATP = L-leucyl-tRNA(Leu) + AMP + diphosphate. This is Leucine--tRNA ligase from Campylobacter jejuni subsp. jejuni serotype O:23/36 (strain 81-176).